The following is a 639-amino-acid chain: Extracellular metalloproteinase mep (639 aa).

A signal peptide spans 1-16 (MHMLSFIGALALPVFV). A propeptide spanning residues 17–245 (CAQSCEPASL…IHGVVDYISE (229 aa)) is cleaved from the precursor. N-linked (GlcNAc...) asparagine glycosylation is found at Asn-287, Asn-320, Asn-336, and Asn-368. His-429 provides a ligand contact to Zn(2+). Residue Glu-430 is part of the active site. Residue His-433 coordinates Zn(2+). Asn-509 is a glycosylation site (N-linked (GlcNAc...) asparagine).

The protein belongs to the peptidase M36 family. Requires Zn(2+) as cofactor.

It is found in the secreted. In terms of biological role, secreted metalloproteinase that allows assimilation of proteinaceous substrates. The sequence is that of Extracellular metalloproteinase mep (mep) from Aspergillus flavus (strain ATCC 200026 / FGSC A1120 / IAM 13836 / NRRL 3357 / JCM 12722 / SRRC 167).